The following is a 707-amino-acid chain: Ribosomal RNA large subunit methyltransferase K/L (707 aa).

Residues 44-155 form the THUMP domain; that stretch reads VIYNLCLWSR…NDILTVSFDL (112 aa).

It belongs to the methyltransferase superfamily. RlmKL family.

The protein localises to the cytoplasm. The catalysed reaction is guanosine(2445) in 23S rRNA + S-adenosyl-L-methionine = N(2)-methylguanosine(2445) in 23S rRNA + S-adenosyl-L-homocysteine + H(+). It carries out the reaction guanosine(2069) in 23S rRNA + S-adenosyl-L-methionine = N(2)-methylguanosine(2069) in 23S rRNA + S-adenosyl-L-homocysteine + H(+). Its function is as follows. Specifically methylates the guanine in position 2445 (m2G2445) and the guanine in position 2069 (m7G2069) of 23S rRNA. The polypeptide is Ribosomal RNA large subunit methyltransferase K/L (Legionella pneumophila (strain Lens)).